Reading from the N-terminus, the 438-residue chain is Serine hydroxymethyltransferase (438 aa).

(6S)-5,6,7,8-tetrahydrofolate contacts are provided by residues Leu133 and 137 to 139 (GHL). Lys242 bears the N6-(pyridoxal phosphate)lysine mark.

Belongs to the SHMT family. In terms of assembly, homodimer. Pyridoxal 5'-phosphate serves as cofactor.

It is found in the cytoplasm. It carries out the reaction (6R)-5,10-methylene-5,6,7,8-tetrahydrofolate + glycine + H2O = (6S)-5,6,7,8-tetrahydrofolate + L-serine. It participates in one-carbon metabolism; tetrahydrofolate interconversion. The protein operates within amino-acid biosynthesis; glycine biosynthesis; glycine from L-serine: step 1/1. Functionally, catalyzes the reversible interconversion of serine and glycine with tetrahydrofolate (THF) serving as the one-carbon carrier. This reaction serves as the major source of one-carbon groups required for the biosynthesis of purines, thymidylate, methionine, and other important biomolecules. Also exhibits THF-independent aldolase activity toward beta-hydroxyamino acids, producing glycine and aldehydes, via a retro-aldol mechanism. The protein is Serine hydroxymethyltransferase of Brucella suis (strain ATCC 23445 / NCTC 10510).